A 348-amino-acid polypeptide reads, in one-letter code: MAASKLLVSDIASVVDHVPSNYVRPVSDRPKMSEVQTSGDSIPLIDLHDLHGPNRADIINQFAHACSSCGFFQIKNHGVPEETIKKMMNAAREFFRQSESERVKHYSADTKKTTRLSTSFNVSKEKVSNWRDFLRLHCYPIEDFINEWPSTPISFREVTAEYATSVRALVLTLLEAISESLGLAKDRVSNTIGKHGQHMAINYYPRCPQPELTYGLPGHKDANLITVLLQDEVSGLQVFKDGKWIAVNPVPNTFIVNLGDQMQVISNEKYKSVLHRAVVNSDMERISIPTFYCPSEDAVISPAQELINEEEDSPAIYRNFTYAEYFEKFWDTAFDTESCIDSFKASTA.

The 101-residue stretch at 194–294 (KHGQHMAINY…RISIPTFYCP (101 aa)) folds into the Fe2OG dioxygenase domain. Residues H219, D221, and H275 each coordinate Fe cation. R285 is a 2-oxoglutarate binding site.

Belongs to the iron/ascorbate-dependent oxidoreductase family. The cofactor is Fe(2+).

It carries out the reaction salicylate + NADH + O2 + H(+) = 2,3-dihydroxybenzoate + NAD(+) + H2O. Its function is as follows. Converts salicylic acid (SA) to 2,3-dihydroxybenzoic acid (2,3-DHBA). Negative regulator of defense against Hyaloperonospora arabidopsidis. In terms of biological role, (Microbial infection) Confers susceptibility to the downy mildew pathogen Hyaloperonospora arabidopsidis. The protein is Protein DMR6-LIKE OXYGENASE 2 of Arabidopsis thaliana (Mouse-ear cress).